The primary structure comprises 300 residues: NAD kinase (300 aa).

Catalysis depends on Asp77, which acts as the Proton acceptor. Residues 77–78 (DG), 151–152 (ND), His162, Arg179, Asp181, and 192–197 (TAYSLS) each bind NAD(+).

The protein belongs to the NAD kinase family. Requires a divalent metal cation as cofactor.

The protein resides in the cytoplasm. It catalyses the reaction NAD(+) + ATP = ADP + NADP(+) + H(+). Functionally, involved in the regulation of the intracellular balance of NAD and NADP, and is a key enzyme in the biosynthesis of NADP. Catalyzes specifically the phosphorylation on 2'-hydroxyl of the adenosine moiety of NAD to yield NADP. In Cellvibrio japonicus (strain Ueda107) (Pseudomonas fluorescens subsp. cellulosa), this protein is NAD kinase.